A 258-amino-acid chain; its full sequence is uncharacterized protein (258 aa).

Residues 1-20 (MKCFQKLYIFILILIVLMAG) form the signal peptide. Cysteine 21 carries N-palmitoyl cysteine lipidation. Cysteine 21 is lipidated: S-diacylglycerol cysteine.

Belongs to the staphylococcal tandem lipoprotein family.

The protein resides in the cell membrane. This is an uncharacterized protein from Staphylococcus aureus (strain bovine RF122 / ET3-1).